We begin with the raw amino-acid sequence, 146 residues long: Anti-sigma F factor (146 aa).

Belongs to the anti-sigma-factor family.

The enzyme catalyses L-seryl-[protein] + ATP = O-phospho-L-seryl-[protein] + ADP + H(+). It catalyses the reaction L-threonyl-[protein] + ATP = O-phospho-L-threonyl-[protein] + ADP + H(+). Its function is as follows. Binds to sigma F and blocks its ability to form an RNA polymerase holoenzyme (E-sigma F). Phosphorylates SpoIIAA on a serine residue. This phosphorylation may enable SpoIIAA to act as an anti-anti-sigma factor that counteracts SpoIIAB and thus releases sigma F from inhibition. The protein is Anti-sigma F factor of Bacillus cereus (strain G9842).